A 212-amino-acid chain; its full sequence is Uracil phosphoribosyltransferase (212 aa).

5-phospho-alpha-D-ribose 1-diphosphate-binding positions include Arg78, Arg103, and 130–138; that span reads DPMLATGGS. Uracil is bound by residues Ile193 and 198–200; that span reads GDA. A 5-phospho-alpha-D-ribose 1-diphosphate-binding site is contributed by Asp199.

The protein belongs to the UPRTase family. The cofactor is Mg(2+).

The enzyme catalyses UMP + diphosphate = 5-phospho-alpha-D-ribose 1-diphosphate + uracil. It functions in the pathway pyrimidine metabolism; UMP biosynthesis via salvage pathway; UMP from uracil: step 1/1. With respect to regulation, allosterically activated by GTP. In terms of biological role, catalyzes the conversion of uracil and 5-phospho-alpha-D-ribose 1-diphosphate (PRPP) to UMP and diphosphate. This Stutzerimonas stutzeri (strain A1501) (Pseudomonas stutzeri) protein is Uracil phosphoribosyltransferase.